A 727-amino-acid chain; its full sequence is ABC transporter G family member STR2 (727 aa).

Topologically, residues 1–475 are cytoplasmic; it reads MKTQGLELET…NFTNIRRTPE (475 aa). The region spanning 25-275 is the ABC transporter domain; sequence LEFESLTYTV…LNRMGRKIPK (251 aa). 69-76 serves as a coordination point for ATP; the sequence is GPSGAGKS. The helical transmembrane segment at 476 to 496 threads the bilayer; it reads LFLSRLMVLTFMGVMMATMFH. Topologically, residues 497–510 are extracellular; the sequence is NPKNTLQGITNRLS. Residues 511–531 traverse the membrane as a helical segment; the sequence is FFIFTVCLFFFSSNDAVPAFI. Residues 532 to 559 are Cytoplasmic-facing; that stretch reads QERFIFIRETSHNAYRASCYTIASLITH. The chain crosses the membrane as a helical span at residues 560–580; the sequence is MPFLALQALAYAAIVWFALEL. The Extracellular portion of the chain corresponds to 581–583; it reads RGP. A helical membrane pass occupies residues 584-604; that stretch reads FIYFFLVLFISLLSTNSFVVF. Residues 605–612 lie on the Cytoplasmic side of the membrane; sequence VSSIVPNY. The chain crosses the membrane as a helical span at residues 613-633; it reads ILGYAAVIAFTALFFLFCGYF. Residues 634 to 699 lie on the Extracellular side of the membrane; it reads LSSEDIPLYW…GTEEIKKRNN (66 aa). An N-linked (GlcNAc...) asparagine glycan is attached at Asn667. Residues 700–720 traverse the membrane as a helical segment; sequence VLIMLGWAVLYRILFYIILRF. Over 721 to 727 the chain is Cytoplasmic; sequence ASKNQRS.

Belongs to the ABC transporter superfamily. ABCG family. Stunted arbuscule (STR) subfamily. In terms of assembly, heterodimerizes with STR; the resulting transporter is located in the peri-arbuscular membrane. Expressed constitutively in the vascular tissue of roots.

It is found in the cell membrane. In terms of biological role, together with STR, required for arbuscule development in arbuscular mycorrhizal symbiosis. The protein is ABC transporter G family member STR2 of Medicago truncatula (Barrel medic).